The chain runs to 535 residues: Cytochrome P450 71C3 (535 aa).

Residues 23–43 traverse the membrane as a helical segment; it reads QTLTLLLIAVPTVLLLLASLA. Cysteine 475 provides a ligand contact to heme.

Belongs to the cytochrome P450 family. The cofactor is heme.

Its subcellular location is the membrane. Its pathway is secondary metabolite biosynthesis; 2,4-dihydroxy-1,4-benzoxazin-3-one biosynthesis; 2,4-dihydroxy-1,4-benzoxazin-3-one from indoleglycerol phosphate: step 5/5. Functionally, catalyzes the conversion of 2-hydroxy-1,4-benzoxazin-3-one (HBOA) to 2,4-dihydroxy-1,4-benzoxazin-3-one (DIBOA). The sequence is that of Cytochrome P450 71C3 (CYP71C3) from Zea mays (Maize).